Consider the following 173-residue polypeptide: MGNPCHFALFDLQPSFRLDLEQLAARYRELARQVHPDRFADAGEREQRLALERSACLNEAYQVLKTPSQRARYLLALRGPELPLEVTVQDPDFLLQQMQLREELEELQDDADLAGVAAFKRRLKTAQEQLNDSFAACWDDDTRREEAERLMRRMQFLDKLSHEVRQLEERLDD.

The region spanning 5–77 (CHFALFDLQP…SQRARYLLAL (73 aa)) is the J domain.

The protein belongs to the HscB family. Interacts with HscA and stimulates its ATPase activity.

In terms of biological role, co-chaperone involved in the maturation of iron-sulfur cluster-containing proteins. Seems to help targeting proteins to be folded toward HscA. The sequence is that of Co-chaperone protein HscB homolog from Ectopseudomonas mendocina (strain ymp) (Pseudomonas mendocina).